The primary structure comprises 205 residues: Small ribosomal subunit protein uS4 (205 aa).

The segment at 19 to 45 (IWGRPKSPVNRREYGPGQHGQRRKGKL) is disordered. An S4 RNA-binding domain is found at 94–157 (SRLDAVVYRA…KQLVIVLEAV (64 aa)).

It belongs to the universal ribosomal protein uS4 family. In terms of assembly, part of the 30S ribosomal subunit. Contacts protein S5. The interaction surface between S4 and S5 is involved in control of translational fidelity.

In terms of biological role, one of the primary rRNA binding proteins, it binds directly to 16S rRNA where it nucleates assembly of the body of the 30S subunit. Functionally, with S5 and S12 plays an important role in translational accuracy. The sequence is that of Small ribosomal subunit protein uS4 from Brucella anthropi (strain ATCC 49188 / DSM 6882 / CCUG 24695 / JCM 21032 / LMG 3331 / NBRC 15819 / NCTC 12168 / Alc 37) (Ochrobactrum anthropi).